Reading from the N-terminus, the 206-residue chain is Thiamine-phosphate synthase (206 aa).

4-amino-2-methyl-5-(diphosphooxymethyl)pyrimidine contacts are provided by residues 35–39 and Asn-67; that span reads QLRHK. Mg(2+) contacts are provided by Asp-68 and Asp-87. Ser-106 is a 4-amino-2-methyl-5-(diphosphooxymethyl)pyrimidine binding site. 2-[(2R,5Z)-2-carboxy-4-methylthiazol-5(2H)-ylidene]ethyl phosphate is bound at residue 132-134; that stretch reads TGS. Lys-135 is a 4-amino-2-methyl-5-(diphosphooxymethyl)pyrimidine binding site. Residue Gly-163 participates in 2-[(2R,5Z)-2-carboxy-4-methylthiazol-5(2H)-ylidene]ethyl phosphate binding.

It belongs to the thiamine-phosphate synthase family. The cofactor is Mg(2+).

The enzyme catalyses 2-[(2R,5Z)-2-carboxy-4-methylthiazol-5(2H)-ylidene]ethyl phosphate + 4-amino-2-methyl-5-(diphosphooxymethyl)pyrimidine + 2 H(+) = thiamine phosphate + CO2 + diphosphate. The catalysed reaction is 2-(2-carboxy-4-methylthiazol-5-yl)ethyl phosphate + 4-amino-2-methyl-5-(diphosphooxymethyl)pyrimidine + 2 H(+) = thiamine phosphate + CO2 + diphosphate. It carries out the reaction 4-methyl-5-(2-phosphooxyethyl)-thiazole + 4-amino-2-methyl-5-(diphosphooxymethyl)pyrimidine + H(+) = thiamine phosphate + diphosphate. The protein operates within cofactor biosynthesis; thiamine diphosphate biosynthesis; thiamine phosphate from 4-amino-2-methyl-5-diphosphomethylpyrimidine and 4-methyl-5-(2-phosphoethyl)-thiazole: step 1/1. Functionally, condenses 4-methyl-5-(beta-hydroxyethyl)thiazole monophosphate (THZ-P) and 2-methyl-4-amino-5-hydroxymethyl pyrimidine pyrophosphate (HMP-PP) to form thiamine monophosphate (TMP). This chain is Thiamine-phosphate synthase, found in Chlorobium phaeobacteroides (strain DSM 266 / SMG 266 / 2430).